We begin with the raw amino-acid sequence, 178 residues long: Peptide methionine sulfoxide reductase MsrA (178 aa).

The active site involves Cys-11.

This sequence belongs to the MsrA Met sulfoxide reductase family.

It carries out the reaction L-methionyl-[protein] + [thioredoxin]-disulfide + H2O = L-methionyl-(S)-S-oxide-[protein] + [thioredoxin]-dithiol. The enzyme catalyses [thioredoxin]-disulfide + L-methionine + H2O = L-methionine (S)-S-oxide + [thioredoxin]-dithiol. Its function is as follows. Has an important function as a repair enzyme for proteins that have been inactivated by oxidation. Catalyzes the reversible oxidation-reduction of methionine sulfoxide in proteins to methionine. The chain is Peptide methionine sulfoxide reductase MsrA from Natronomonas pharaonis (strain ATCC 35678 / DSM 2160 / CIP 103997 / JCM 8858 / NBRC 14720 / NCIMB 2260 / Gabara) (Halobacterium pharaonis).